The sequence spans 877 residues: Probable alpha/beta-glucosidase agdC (877 aa).

The signal sequence occupies residues 1-14; sequence MLGSLLLLAPLAGA. N-linked (GlcNAc...) asparagine glycosylation is found at Asn-171, Asn-293, and Asn-373. Asp-422 serves as the catalytic Nucleophile. The active site involves Glu-425. A disordered region spans residues 432–476; that stretch reads DPCTDPERYSSENNLPPAPPPVRSSSPRPLPGFPADFQPSSASRS. Residues 447 to 463 show a composition bias toward pro residues; it reads PPAPPPVRSSSPRPLPG. Asn-508 carries an N-linked (GlcNAc...) asparagine glycan. Catalysis depends on Asp-573, which acts as the Proton donor. N-linked (GlcNAc...) asparagine glycosylation is found at Asn-574, Asn-610, and Asn-744.

The protein belongs to the glycosyl hydrolase 31 family.

It is found in the secreted. The enzyme catalyses Hydrolysis of terminal, non-reducing (1-&gt;4)-linked alpha-D-glucose residues with release of alpha-D-glucose.. The catalysed reaction is Hydrolysis of terminal, non-reducing beta-D-glucosyl residues with release of beta-D-glucose.. In terms of biological role, glucosidase involved in the degradation of cellulosic biomass. Has both alpha- and beta-glucosidase activity. This is Probable alpha/beta-glucosidase agdC (agdC) from Aspergillus oryzae (strain ATCC 42149 / RIB 40) (Yellow koji mold).